A 1448-amino-acid chain; its full sequence is Probable serine/threonine-protein kinase irlB (1448 aa).

Residues 412–423 (DDDDYDDYDDDD) show a composition bias toward acidic residues. Positions 412–446 (DDDDYDDYDDDDDHHSGCNNNNNNNNDGDHNEDEN) are disordered. The span at 428-437 (GCNNNNNNNN) shows a compositional bias: low complexity. Coiled-coil stretches lie at residues 666 to 817 (AESE…EIQN), 887 to 921 (EIQLEEENQKKKEMETIDEYEEININKKQINSNMK), and 974 to 1016 (ENNK…QDED). The segment at 975–1008 (NNKKQNLINDNNNNNNNNNNNNNNNNNNNNNNKL) is disordered. The span at 978 to 1008 (KQNLINDNNNNNNNNNNNNNNNNNNNNNNKL) shows a compositional bias: low complexity. The 267-residue stretch at 1027 to 1293 (RNESNILGRG…IQNVLNHPLF (267 aa)) folds into the Protein kinase domain. ATP is bound by residues 1033–1041 (LGRGSNGTL) and K1056. D1151 (proton acceptor) is an active-site residue. A KEN domain is found at 1296–1448 (LEKKIQFIDA…TIDYLFNFYN (153 aa)).

It belongs to the protein kinase superfamily. Ser/Thr protein kinase family.

It carries out the reaction L-seryl-[protein] + ATP = O-phospho-L-seryl-[protein] + ADP + H(+). It catalyses the reaction L-threonyl-[protein] + ATP = O-phospho-L-threonyl-[protein] + ADP + H(+). The chain is Probable serine/threonine-protein kinase irlB (irlB-1) from Dictyostelium discoideum (Social amoeba).